A 650-amino-acid chain; its full sequence is uncharacterized protein (650 aa).

The protein belongs to the mimivirus L515/L516 family.

It localises to the virion. This is an uncharacterized protein from Acanthamoeba polyphaga (Amoeba).